A 177-amino-acid polypeptide reads, in one-letter code: uncharacterized protein (177 aa).

The signal sequence occupies residues 1–22; the sequence is MCGVVVVIVALVPADPLLPAFA. 3 helical membrane passes run 31–51, 94–114, and 136–156; these read VFIP…TCVF, ISLM…LKFV, and LFPI…LLEI.

It localises to the membrane. This is an uncharacterized protein from Saccharomyces cerevisiae (strain ATCC 204508 / S288c) (Baker's yeast).